The chain runs to 66 residues: uncharacterized protein (66 aa).

A run of 2 helical transmembrane segments spans residues 4-24 (ALFI…LLIF) and 38-58 (LLTP…ILVL).

It localises to the membrane. This is an uncharacterized protein from Saccharomyces cerevisiae (strain ATCC 204508 / S288c) (Baker's yeast).